The sequence spans 599 residues: Sulfite reductase [NADPH] flavoprotein alpha-component (599 aa).

The region spanning 64–202 (ITIISASQTG…AASEWRARVV (139 aa)) is the Flavodoxin-like domain. FMN contacts are provided by residues 70 to 75 (SQTGNA), 117 to 120 (STQG), and 153 to 162 (LGDSSYEFFC). In terms of domain architecture, FAD-binding FR-type spans 234-448 (DAPLVASLSV…IEHNDNFRLP (215 aa)). FAD-binding positions include threonine 322, alanine 356, 386–389 (RLYS), 404–406 (TVG), tyrosine 410, and 419–422 (GGAS). NADP(+) is bound by residues 519–520 (SR), 525–529 (KVYVQ), and aspartate 561. Tyrosine 599 is a binding site for FAD.

This sequence belongs to the NADPH-dependent sulphite reductase flavoprotein subunit CysJ family. The protein in the N-terminal section; belongs to the flavodoxin family. It in the C-terminal section; belongs to the flavoprotein pyridine nucleotide cytochrome reductase family. As to quaternary structure, alpha(8)-beta(8). The alpha component is a flavoprotein, the beta component is a hemoprotein. The cofactor is FAD. It depends on FMN as a cofactor.

It catalyses the reaction hydrogen sulfide + 3 NADP(+) + 3 H2O = sulfite + 3 NADPH + 4 H(+). It functions in the pathway sulfur metabolism; hydrogen sulfide biosynthesis; hydrogen sulfide from sulfite (NADPH route): step 1/1. Component of the sulfite reductase complex that catalyzes the 6-electron reduction of sulfite to sulfide. This is one of several activities required for the biosynthesis of L-cysteine from sulfate. The flavoprotein component catalyzes the electron flow from NADPH -&gt; FAD -&gt; FMN to the hemoprotein component. In Shigella dysenteriae serotype 1 (strain Sd197), this protein is Sulfite reductase [NADPH] flavoprotein alpha-component.